We begin with the raw amino-acid sequence, 307 residues long: Ornithine carbamoyltransferase (307 aa).

Carbamoyl phosphate contacts are provided by residues 50–53, Q77, R101, and 128–131; these read STRT and HPCQ. L-ornithine is bound by residues N160, D224, and 228–229; that span reads SM. Carbamoyl phosphate is bound by residues 264–265 and R292; that span reads CL.

The protein belongs to the aspartate/ornithine carbamoyltransferase superfamily. OTCase family. Homotrimer.

It localises to the cytoplasm. It catalyses the reaction carbamoyl phosphate + L-ornithine = L-citrulline + phosphate + H(+). The protein operates within amino-acid biosynthesis; L-arginine biosynthesis; L-arginine from L-ornithine and carbamoyl phosphate: step 1/3. In terms of biological role, reversibly catalyzes the transfer of the carbamoyl group from carbamoyl phosphate (CP) to the N(epsilon) atom of ornithine (ORN) to produce L-citrulline, which is a substrate for argininosuccinate synthetase, the enzyme involved in the final step in arginine biosynthesis. The sequence is that of Ornithine carbamoyltransferase (argF) from Mycobacterium bovis (strain ATCC BAA-935 / AF2122/97).